A 152-amino-acid polypeptide reads, in one-letter code: MRTYNISPLWRSTIGFDRVFDLVDAARHTAGEANYPPCNVERLSDDRYRISLALAGFSPDEITVTAEQSVLTIEGRKGEKGRRDFVYRGISSRPFKRQFGLAAHVRVEGARFDNGLLQIELVREIPDAMKPRRIPIDNLAASDVQQIEREAA.

The sHSP domain occupies 29 to 139 (TAGEANYPPC…KPRRIPIDNL (111 aa)).

This sequence belongs to the small heat shock protein (HSP20) family.

The chain is Small heat shock protein HspA (hspA) from Bradyrhizobium diazoefficiens (strain JCM 10833 / BCRC 13528 / IAM 13628 / NBRC 14792 / USDA 110).